A 152-amino-acid chain; its full sequence is Diamine acetyltransferase (152 aa).

Positions 5 to 152 (FEVRKATIDD…SFLDLTPKSD (148 aa)) constitute an N-acetyltransferase domain. Y127 acts as the Proton donor in catalysis.

This sequence belongs to the acetyltransferase family. As to quaternary structure, homotetramer.

It localises to the cytoplasm. It catalyses the reaction an alkane-alpha,omega-diamine + acetyl-CoA = an N-acetylalkane-alpha,omega-diamine + CoA + H(+). It functions in the pathway amine and polyamine degradation; putrescine degradation; N-acetylputrescine from putrescine: step 1/1. Functionally, enzyme which catalyzes the acetylation of polyamines. Displays higher substrate specificity for spermine than for spermidine. May function to acetylate host-derived polyamines, thus alleviating the necessity for de novo synthesis of these molecules. The polypeptide is Diamine acetyltransferase (Cryptosporidium parvum (strain Iowa II)).